The primary structure comprises 819 residues: MNAHALGILEFSRLLAHVAGRATSAPGAAAVRALTPRTDREWIEAEHARVRAVRALVASELGWPTEPIPDIGEPLRRLRIEGLSWTALELLQGATLLRSSRRTRATLRDPRRPAIMLAYLVRYAEALVDLEPREQAIERAIGDDGTVRDDASPTLRKVRRDLRETEGQLVRLLEREMGKLEAHHQVSDLSVTMRNGRWVMPMRREARGYVGGIVHDSSGTGATIYVEPPAAVEFGNRVRELEIEEQREVERVLRALTDEIRPYHDAIGGAYDALVALDSLYARARYAIEAQCAPVTFGEPSAGFRIVDGRHPLLLASGGAVVPFDLTLHAGERTMLVSGPNTGGKTVLLKAIGLISMMAQCGVPAPLGETSQLAVFDDLYADVGDEQSIEASLSTFSAHLKNLGEILRSATTSSLVLIDELGSGTDPAEGAALGGAILETLTRRGTLTLATTHLGQLKLLATDVEGVVNASLQFDAVQLAPTYRLLKGVPGRSYGLSIARRLQIDEAVIQRAEERLPSGERDMAVLLADVEAREALLADRERLMEIDQEKLRARLATVGDRELKVREREREAERSARQEARRFLLEARGQVERAIADVKRQAQVEGEAFEETARAARRSIEEAAAEQGEAVAYVGLRGERDRARVDAKRGAAAAAANPSLGRTLRPERGAVAPLGEGDHVIVSTLDGKQGRIVSVRGQDARVAVGSLTVTVPLRTLTRSAAAPVSMYRTPILGDVPEVEPVREVDVRGLRVDEVDDQVLQALDAAVRNDLRELRIIHGKGTGALRSRVSEMLKKDTRVTGFRLGAWNEGGAGVTVAELA.

339-346 contributes to the ATP binding site; it reads GPNTGGKT. Residues 744-819 enclose the Smr domain; the sequence is VDVRGLRVDE…GAGVTVAELA (76 aa).

This sequence belongs to the DNA mismatch repair MutS family. MutS2 subfamily. As to quaternary structure, homodimer. Binds to stalled ribosomes, contacting rRNA.

In terms of biological role, endonuclease that is involved in the suppression of homologous recombination and thus may have a key role in the control of bacterial genetic diversity. Acts as a ribosome collision sensor, splitting the ribosome into its 2 subunits. Detects stalled/collided 70S ribosomes which it binds and splits by an ATP-hydrolysis driven conformational change. Acts upstream of the ribosome quality control system (RQC), a ribosome-associated complex that mediates the extraction of incompletely synthesized nascent chains from stalled ribosomes and their subsequent degradation. Probably generates substrates for RQC. This chain is Endonuclease MutS2, found in Gemmatimonas aurantiaca (strain DSM 14586 / JCM 11422 / NBRC 100505 / T-27).